The sequence spans 145 residues: Small ribosomal subunit protein eS19 (145 aa).

The interval 120 to 145 (GGRRISENGQRDLDRIAAQTLEEDDE) is disordered. The segment covering 123–134 (RISENGQRDLDR) has biased composition (basic and acidic residues).

This sequence belongs to the eukaryotic ribosomal protein eS19 family. In terms of assembly, component of the small ribosomal subunit. Mature ribosomes consist of a small (40S) and a large (60S) subunit. The 40S subunit contains about 32 different proteins and 1 molecule of RNA (18S). The 60S subunit contains 45 different proteins and 3 molecules of RNA (25S, 5.8S and 5S).

The protein localises to the cytoplasm. In terms of biological role, component of the ribosome, a large ribonucleoprotein complex responsible for the synthesis of proteins in the cell. The small ribosomal subunit (SSU) binds messenger RNAs (mRNAs) and translates the encoded message by selecting cognate aminoacyl-transfer RNA (tRNA) molecules. The large subunit (LSU) contains the ribosomal catalytic site termed the peptidyl transferase center (PTC), which catalyzes the formation of peptide bonds, thereby polymerizing the amino acids delivered by tRNAs into a polypeptide chain. The nascent polypeptides leave the ribosome through a tunnel in the LSU and interact with protein factors that function in enzymatic processing, targeting, and the membrane insertion of nascent chains at the exit of the ribosomal tunnel. RPS19A is required for proper maturation of the small (40S) ribosomal subunit. This chain is Small ribosomal subunit protein eS19 (RPS19A), found in Candida albicans (strain SC5314 / ATCC MYA-2876) (Yeast).